The primary structure comprises 249 residues: Testis-expressed protein 101 (249 aa).

The signal sequence occupies residues 1–25; the sequence is MGTPRIQHLLILLVLGASLLTSGLE. 2 N-linked (GlcNAc...) asparagine glycosylation sites follow: Asn-45 and Asn-159. The UPAR/Ly6 domain maps to 140–211; sequence CPTCVALGTC…PMFVREACPH (72 aa). Asn-222 is lipidated: GPI-anchor amidated asparagine. The propeptide at 223 to 249 is removed in mature form; sequence GATCLPIPVWGLQLLLPLLLPSFIHFS.

As to quaternary structure, interacts with VAMP3. Interacts with LY6K. Interacts with DPEP3; co-localized on the cell surface of spermatocytes, spermatids, and testicular spermatozoa, co-localized only in cytoplasmic droplets of caput and corpus epididymal sperm. Interacts with ADAM5. N-glycosylated; by high mannose and/or biantennary complex and/or certain types of hybrid oligosaccharides; possesses different oligosaccharides chains according to its subcellular localization in the testis. Post-translationally, sheds from membrane raft by ACE and released from the cell surface of epididymal sperm while it passes through the caput epididymis leading to disappearance of TEX101 on spermatozoa; is essential to produce fertile spermatozoa. In terms of tissue distribution, detected in testis and spermatogonia. Not detected in spermatocytes. Detected in blood leukocytes.

It localises to the cell membrane. It is found in the membrane raft. Its subcellular location is the cytoplasmic vesicle. The protein localises to the secretory vesicle. The protein resides in the acrosome. It localises to the secreted. Its function is as follows. Plays a role in fertilization by controlling binding of sperm to zona pellucida and migration of spermatozoa into the oviduct. May play a role in signal transduction and promote protein tyrosine phosphorylation. In Homo sapiens (Human), this protein is Testis-expressed protein 101.